The primary structure comprises 406 residues: 2,3-bisphosphoglycerate-independent phosphoglycerate mutase (406 aa).

The protein belongs to the BPG-independent phosphoglycerate mutase family. A-PGAM subfamily.

It catalyses the reaction (2R)-2-phosphoglycerate = (2R)-3-phosphoglycerate. The protein operates within carbohydrate degradation; glycolysis; pyruvate from D-glyceraldehyde 3-phosphate: step 3/5. Catalyzes the interconversion of 2-phosphoglycerate and 3-phosphoglycerate. This is 2,3-bisphosphoglycerate-independent phosphoglycerate mutase from Methanococcus vannielii (strain ATCC 35089 / DSM 1224 / JCM 13029 / OCM 148 / SB).